A 258-amino-acid chain; its full sequence is Tryptophan synthase alpha chain (258 aa).

Active-site proton acceptor residues include Glu52 and Asp63.

This sequence belongs to the TrpA family. Tetramer of two alpha and two beta chains.

The catalysed reaction is (1S,2R)-1-C-(indol-3-yl)glycerol 3-phosphate + L-serine = D-glyceraldehyde 3-phosphate + L-tryptophan + H2O. The protein operates within amino-acid biosynthesis; L-tryptophan biosynthesis; L-tryptophan from chorismate: step 5/5. In terms of biological role, the alpha subunit is responsible for the aldol cleavage of indoleglycerol phosphate to indole and glyceraldehyde 3-phosphate. The chain is Tryptophan synthase alpha chain from Streptococcus pneumoniae (strain P1031).